A 150-amino-acid chain; its full sequence is Ribonuclease pancreatic delta-type (150 aa).

Residues 1–25 (MGLEKSFILFSLLVLVLGWVQPSLG) form the signal peptide. Residue R35 coordinates substrate. H37 functions as the Proton acceptor in the catalytic mechanism. Cystine bridges form between C51/C110, C65/C121, C83/C136, and C90/C98. Substrate contacts are provided by residues 66–70 (KRVNT), K91, and R111. Residue H145 is the Proton donor of the active site.

The protein belongs to the pancreatic ribonuclease family. As to quaternary structure, monomer.

The protein localises to the secreted. The enzyme catalyses an [RNA] containing cytidine + H2O = an [RNA]-3'-cytidine-3'-phosphate + a 5'-hydroxy-ribonucleotide-3'-[RNA].. It carries out the reaction an [RNA] containing uridine + H2O = an [RNA]-3'-uridine-3'-phosphate + a 5'-hydroxy-ribonucleotide-3'-[RNA].. Endonuclease that catalyzes the cleavage of RNA on the 3' side of pyrimidine nucleotides. Acts on single-stranded and double-stranded RNA. This is Ribonuclease pancreatic delta-type (Rnase1d) from Rattus norvegicus (Rat).